Consider the following 125-residue polypeptide: MIKIDFEKMGGLIPAVIQDNESGEVLMVAFMDEKTLNLTLESGKTWFFSRTRNKYWMKGEESGNTQDVVEVLTDCDADTVVIKVKQNGPAACHTGNRSCFYVKYENGSWVEHSNPLFDPNTVYKK.

Position 74 (aspartate 74) interacts with Mg(2+). Cysteine 75 lines the Zn(2+) pocket. The Mg(2+) site is built by aspartate 76 and aspartate 78. Cysteine 92 and cysteine 99 together coordinate Zn(2+).

This sequence belongs to the PRA-CH family. Homodimer. The cofactor is Mg(2+). Zn(2+) serves as cofactor.

The protein localises to the cytoplasm. The catalysed reaction is 1-(5-phospho-beta-D-ribosyl)-5'-AMP + H2O = 1-(5-phospho-beta-D-ribosyl)-5-[(5-phospho-beta-D-ribosylamino)methylideneamino]imidazole-4-carboxamide. The protein operates within amino-acid biosynthesis; L-histidine biosynthesis; L-histidine from 5-phospho-alpha-D-ribose 1-diphosphate: step 3/9. Its function is as follows. Catalyzes the hydrolysis of the adenine ring of phosphoribosyl-AMP. The polypeptide is Phosphoribosyl-AMP cyclohydrolase (Geobacter sp. (strain M21)).